Here is a 331-residue protein sequence, read N- to C-terminus: tRNA N6-adenosine threonylcarbamoyltransferase (331 aa).

Residues His-107 and His-111 each coordinate Fe cation. Residues Leu-129 to Gly-133, Asp-162, Gly-175, and Asn-269 contribute to the substrate site. Residue Asp-297 coordinates Fe cation.

It belongs to the KAE1 / TsaD family. Fe(2+) serves as cofactor.

The protein localises to the cytoplasm. It carries out the reaction L-threonylcarbamoyladenylate + adenosine(37) in tRNA = N(6)-L-threonylcarbamoyladenosine(37) in tRNA + AMP + H(+). Functionally, required for the formation of a threonylcarbamoyl group on adenosine at position 37 (t(6)A37) in tRNAs that read codons beginning with adenine. Is involved in the transfer of the threonylcarbamoyl moiety of threonylcarbamoyl-AMP (TC-AMP) to the N6 group of A37, together with TsaE and TsaB. TsaD likely plays a direct catalytic role in this reaction. The chain is tRNA N6-adenosine threonylcarbamoyltransferase from Wolinella succinogenes (strain ATCC 29543 / DSM 1740 / CCUG 13145 / JCM 31913 / LMG 7466 / NCTC 11488 / FDC 602W) (Vibrio succinogenes).